The following is a 310-amino-acid chain: Translocator protein BipD (310 aa).

Coiled-coil stretches lie at residues 127-171 (DPIL…LQDY) and 250-299 (DTAR…AIST).

The protein belongs to the invasin protein D family.

It localises to the secreted. Functionally, required for invasion of epithelial cells, as well as for survival within host cells, escape from endocytic vesicles and subsequent actin-tail formation. Probably regulates the secretion of effectors BipB and BipC and their final integration into the target cell membrane. The polypeptide is Translocator protein BipD (bipD) (Burkholderia thailandensis (strain ATCC 700388 / DSM 13276 / CCUG 48851 / CIP 106301 / E264)).